The chain runs to 321 residues: Beta-ketoacyl-[acyl-carrier-protein] synthase III (321 aa).

Catalysis depends on residues Cys115 and His248. The interval 249 to 253 (QANIR) is ACP-binding. Residue Asn278 is part of the active site.

This sequence belongs to the thiolase-like superfamily. FabH family. In terms of assembly, homodimer.

The protein resides in the cytoplasm. The catalysed reaction is malonyl-[ACP] + acetyl-CoA + H(+) = 3-oxobutanoyl-[ACP] + CO2 + CoA. Its pathway is lipid metabolism; fatty acid biosynthesis. Catalyzes the condensation reaction of fatty acid synthesis by the addition to an acyl acceptor of two carbons from malonyl-ACP. Catalyzes the first condensation reaction which initiates fatty acid synthesis and may therefore play a role in governing the total rate of fatty acid production. Possesses both acetoacetyl-ACP synthase and acetyl transacylase activities. Its substrate specificity determines the biosynthesis of branched-chain and/or straight-chain of fatty acids. The sequence is that of Beta-ketoacyl-[acyl-carrier-protein] synthase III from Azoarcus sp. (strain BH72).